We begin with the raw amino-acid sequence, 302 residues long: MLSILSSLLSLLFLFIISCFFITSHFWFPLSLPKILGFIKITSSRDDYDNEQRDEGTYVVGVEELQRELMPRHVAVIMDGNRRWAKRAGLLTSQGHEAGAKRLIEFSELCFKLGIHTVSAFAFSTENWGRHKIEVKCLMSLIQHYLKSKIQYFQREETRVSVIGNLTKIPESLLRTVQEIEEATRSYKKKHLILAIDYSGRLDILRACKSIVKKSEKGLIREEDVDEALIERELLTNCTEFPSPDLLIRTSGEQRISNFFLWQLAYTELFFSPVLWPDFDKDKLLEALVSYQRRERRFGCRV.

The protein belongs to the UPP synthase family. The cofactor is Mg(2+).

The protein operates within protein modification; protein glycosylation. Catalyzes cis-prenyl chain elongation to produce the polyprenyl backbone of dolichol, a glycosyl carrier-lipid required for the biosynthesis of several classes of glycoprotein. The protein is Dehydrodolichyl diphosphate synthase 3 of Arabidopsis thaliana (Mouse-ear cress).